The primary structure comprises 338 residues: Ketol-acid reductoisomerase (NADP(+)) (338 aa).

The region spanning 1 to 181 (MKIYYDKDCN…GGGKAGIIET (181 aa)) is the KARI N-terminal Rossmann domain. Residues 24 to 27 (YGSQ), K47, S50, S52, and 82 to 85 (DEIQ) contribute to the NADP(+) site. Residue H107 is part of the active site. Position 133 (G133) interacts with NADP(+). In terms of domain architecture, KARI C-terminal knotted spans 182–327 (SFKEETETDL…ARLRSMMAWI (146 aa)). The Mg(2+) site is built by D190, E194, E226, and E230. Position 251 (S251) interacts with substrate.

Belongs to the ketol-acid reductoisomerase family. The cofactor is Mg(2+).

The catalysed reaction is (2R)-2,3-dihydroxy-3-methylbutanoate + NADP(+) = (2S)-2-acetolactate + NADPH + H(+). It catalyses the reaction (2R,3R)-2,3-dihydroxy-3-methylpentanoate + NADP(+) = (S)-2-ethyl-2-hydroxy-3-oxobutanoate + NADPH + H(+). The protein operates within amino-acid biosynthesis; L-isoleucine biosynthesis; L-isoleucine from 2-oxobutanoate: step 2/4. Its pathway is amino-acid biosynthesis; L-valine biosynthesis; L-valine from pyruvate: step 2/4. In terms of biological role, involved in the biosynthesis of branched-chain amino acids (BCAA). Catalyzes an alkyl-migration followed by a ketol-acid reduction of (S)-2-acetolactate (S2AL) to yield (R)-2,3-dihydroxy-isovalerate. In the isomerase reaction, S2AL is rearranged via a Mg-dependent methyl migration to produce 3-hydroxy-3-methyl-2-ketobutyrate (HMKB). In the reductase reaction, this 2-ketoacid undergoes a metal-dependent reduction by NADPH to yield (R)-2,3-dihydroxy-isovalerate. This chain is Ketol-acid reductoisomerase (NADP(+)), found in Geotalea uraniireducens (strain Rf4) (Geobacter uraniireducens).